The following is a 518-amino-acid chain: Cytochrome P450 704C1 (518 aa).

2 consecutive transmembrane segments (helical) span residues 5 to 25 and 299 to 319; these read ILTMFVTVSALALACSLWIAS and VILNFMVAARDTTAIALSWFI. Position 461 (Cys-461) interacts with heme.

The protein belongs to the cytochrome P450 family. Requires heme as cofactor.

It localises to the membrane. In Pinus taeda (Loblolly pine), this protein is Cytochrome P450 704C1 (CYP704C1).